Consider the following 185-residue polypeptide: Ribosome-recycling factor (185 aa).

It belongs to the RRF family.

The protein localises to the cytoplasm. Its function is as follows. Responsible for the release of ribosomes from messenger RNA at the termination of protein biosynthesis. May increase the efficiency of translation by recycling ribosomes from one round of translation to another. This is Ribosome-recycling factor from Aliivibrio fischeri (strain MJ11) (Vibrio fischeri).